Reading from the N-terminus, the 38-residue chain is Photosystem II reaction center protein L (38 aa).

Residues 17 to 37 (SLYWGLLLIFVLAILFSNYFF) traverse the membrane as a helical segment.

Belongs to the PsbL family. PSII is composed of 1 copy each of membrane proteins PsbA, PsbB, PsbC, PsbD, PsbE, PsbF, PsbH, PsbI, PsbJ, PsbK, PsbL, PsbM, PsbT, PsbX, PsbY, PsbZ, Psb30/Ycf12, at least 3 peripheral proteins of the oxygen-evolving complex and a large number of cofactors. It forms dimeric complexes.

Its subcellular location is the plastid. It is found in the chloroplast thylakoid membrane. Its function is as follows. One of the components of the core complex of photosystem II (PSII). PSII is a light-driven water:plastoquinone oxidoreductase that uses light energy to abstract electrons from H(2)O, generating O(2) and a proton gradient subsequently used for ATP formation. It consists of a core antenna complex that captures photons, and an electron transfer chain that converts photonic excitation into a charge separation. This subunit is found at the monomer-monomer interface and is required for correct PSII assembly and/or dimerization. This Aethionema cordifolium (Lebanon stonecress) protein is Photosystem II reaction center protein L.